Consider the following 227-residue polypeptide: Cysteine-rich hydrophobic domain-containing protein 1 (227 aa).

The tract at residues 1 to 84 (MSILLPNMAE…PPRVVSEEHL (84 aa)) is disordered. The segment covering 13–23 (TISELEEEEEA) has biased composition (acidic residues). Over residues 24–44 (ATSSSSPSSSPSSSSSSSVSG) the composition is skewed to low complexity. The span at 45–72 (PDEDEEDEEEEEEEDEEEEDEEEEEEEV) shows a compositional bias: acidic residues. Positions 46-73 (DEDEEDEEEEEEEDEEEEDEEEEEEEVP) form a coiled coil.

It belongs to the CHIC family. Post-translationally, palmitoylated. As to expression, expressed moderately in the brain.

The protein resides in the cell membrane. It is found in the cytoplasmic vesicle. The protein is Cysteine-rich hydrophobic domain-containing protein 1 (Chic1) of Mus musculus (Mouse).